The following is a 341-amino-acid chain: Ribulose-5-phosphate reductase (341 aa).

C38, H64, E65, and E144 together coordinate Zn(2+).

Belongs to the zinc-containing alcohol dehydrogenase family. Zn(2+) is required as a cofactor.

It catalyses the reaction D-ribitol 5-phosphate + NADP(+) = D-ribulose 5-phosphate + NADPH + H(+). It functions in the pathway cell wall biogenesis; poly(ribitol phosphate) teichoic acid biosynthesis. Catalyzes the NADPH dependent reduction of D-ribulose 5-phosphate to D-ribitol 5-phosphate. This chain is Ribulose-5-phosphate reductase, found in Bacillus spizizenii (strain ATCC 23059 / NRRL B-14472 / W23) (Bacillus subtilis subsp. spizizenii).